Reading from the N-terminus, the 302-residue chain is Probable alpha-L-glutamate ligase (302 aa).

The ATP-grasp domain maps to 112-294 (LQLLLKTGVP…IAAEIIDYIE (183 aa)). ATP is bound by residues Lys148, 185–186 (DF), Asp194, and 218–220 (RAN). Residues Asp255, Glu267, and Asn269 each coordinate Mg(2+). The Mn(2+) site is built by Asp255, Glu267, and Asn269.

The protein belongs to the RimK family. The cofactor is Mg(2+). Requires Mn(2+) as cofactor.

The protein is Probable alpha-L-glutamate ligase of Haemophilus influenzae (strain 86-028NP).